The primary structure comprises 410 residues: Putative competence-damage inducible protein (410 aa).

Belongs to the CinA family.

In Clostridium kluyveri (strain NBRC 12016), this protein is Putative competence-damage inducible protein.